A 185-amino-acid polypeptide reads, in one-letter code: GTP-dependent dephospho-CoA kinase (185 aa).

Residues aspartate 50, valine 52, aspartate 73, lysine 75, and glutamate 128 each coordinate GTP.

It belongs to the GTP-dependent DPCK family.

The enzyme catalyses 3'-dephospho-CoA + GTP = GDP + CoA + H(+). It participates in cofactor biosynthesis; coenzyme A biosynthesis. Functionally, catalyzes the GTP-dependent phosphorylation of the 3'-hydroxyl group of dephosphocoenzyme A to form coenzyme A (CoA). This chain is GTP-dependent dephospho-CoA kinase, found in Aeropyrum pernix (strain ATCC 700893 / DSM 11879 / JCM 9820 / NBRC 100138 / K1).